A 603-amino-acid polypeptide reads, in one-letter code: DNA mismatch repair protein MutL (603 aa).

It belongs to the DNA mismatch repair MutL/HexB family.

Its function is as follows. This protein is involved in the repair of mismatches in DNA. It is required for dam-dependent methyl-directed DNA mismatch repair. May act as a 'molecular matchmaker', a protein that promotes the formation of a stable complex between two or more DNA-binding proteins in an ATP-dependent manner without itself being part of a final effector complex. In Sphingopyxis alaskensis (strain DSM 13593 / LMG 18877 / RB2256) (Sphingomonas alaskensis), this protein is DNA mismatch repair protein MutL.